The following is a 340-amino-acid chain: Phenylalanine--tRNA ligase alpha subunit (340 aa).

Mg(2+) is bound at residue Glu255.

Belongs to the class-II aminoacyl-tRNA synthetase family. Phe-tRNA synthetase alpha subunit type 1 subfamily. In terms of assembly, tetramer of two alpha and two beta subunits. It depends on Mg(2+) as a cofactor.

It localises to the cytoplasm. The enzyme catalyses tRNA(Phe) + L-phenylalanine + ATP = L-phenylalanyl-tRNA(Phe) + AMP + diphosphate + H(+). This is Phenylalanine--tRNA ligase alpha subunit from Heliobacterium modesticaldum (strain ATCC 51547 / Ice1).